The primary structure comprises 176 residues: Membrane glycoprotein UL144 (176 aa).

A signal peptide spans 1–20 (MKPLIMLICFAVILLQLGVT). TNFR-Cys repeat units follow at residues 22–56 (VCQH…SVTC) and 58–95 (PCPN…NTVC). 6 cysteine pairs are disulfide-bonded: Cys-23–Cys-34, Cys-35–Cys-48, Cys-38–Cys-56, Cys-59–Cys-71, Cys-74–Cys-87, and Cys-77–Cys-95. The chain crosses the membrane as a helical span at residues 134–154 (LAWLSLFIFLVGIILLILYLI).

Interacts with host TRIM23; this interaction causes auto-ubiquitination of TRAF6, leading to NF-kappaB activation.

The protein resides in the membrane. Its function is as follows. Activates NF-kappaB in a tumor necrosis factor receptor (TNFR)-associated factor 6 (TRAF6)-dependent manner, causing the up-regulation of the chemokine CCL22. This is Membrane glycoprotein UL144 (UL144) from Homo sapiens (Human).